The primary structure comprises 219 residues: Elongation factor Ts, chloroplastic (219 aa).

This sequence belongs to the EF-Ts family.

Its subcellular location is the plastid. It localises to the chloroplast. Its function is as follows. Associates with the EF-Tu.GDP complex and induces the exchange of GDP to GTP. It remains bound to the aminoacyl-tRNA.EF-Tu.GTP complex up to the GTP hydrolysis stage on the ribosome. The sequence is that of Elongation factor Ts, chloroplastic (tsf) from Guillardia theta (Cryptophyte).